The sequence spans 964 residues: A-type ATP synthase subunit A (964 aa).

The DOD-type homing endonuclease domain occupies 392–518 (FLGYLMANGT…LSYLFAKLGI (127 aa)).

This sequence belongs to the ATPase alpha/beta chains family. In terms of assembly, has multiple subunits with at least A(3), B(3), C, D, E, F, H, I and proteolipid K(x). This protein undergoes a protein self splicing that involves a post-translational excision of the VDE intervening region (intein) followed by peptide ligation.

It is found in the cell membrane. The enzyme catalyses ATP + H2O + 4 H(+)(in) = ADP + phosphate + 5 H(+)(out). Its function is as follows. Component of the A-type ATP synthase that produces ATP from ADP in the presence of a proton gradient across the membrane. The A chain is the catalytic subunit. This Pyrococcus horikoshii (strain ATCC 700860 / DSM 12428 / JCM 9974 / NBRC 100139 / OT-3) protein is A-type ATP synthase subunit A.